The chain runs to 85 residues: Small ribosomal subunit protein eS27 (85 aa).

The C4-type zinc-finger motif lies at 38–60 (CHGCRTITTVFSHAQNVVICSSC).

Belongs to the eukaryotic ribosomal protein eS27 family. The cofactor is Zn(2+).

The polypeptide is Small ribosomal subunit protein eS27 (rps27) (Dictyostelium discoideum (Social amoeba)).